The sequence spans 149 residues: Squidulin (149 aa).

A1 carries the N-acetylalanine modification. EF-hand domains lie at 7 to 42, 43 to 78, 80 to 115, and 117 to 149; these read KQIA…LGRT, PSDA…QMGP, DPEK…FSDE, and LTSE…MTPK. Ca(2+) contacts are provided by D20, D22, D24, Q26, E31, D56, D58, N60, T62, E67, D93, D95, N97, E104, D130, D132, D134, M136, and E141.

It belongs to the calmodulin family.

Its function is as follows. Not known. This protein has four functional calcium-binding sites. This is Squidulin from Doryteuthis pealeii (Longfin inshore squid).